The sequence spans 101 residues: Small ribosomal subunit protein uS14 (101 aa).

It belongs to the universal ribosomal protein uS14 family. In terms of assembly, part of the 30S ribosomal subunit. Contacts proteins S3 and S10.

Its function is as follows. Binds 16S rRNA, required for the assembly of 30S particles and may also be responsible for determining the conformation of the 16S rRNA at the A site. This chain is Small ribosomal subunit protein uS14, found in Gluconobacter oxydans (strain 621H) (Gluconobacter suboxydans).